The following is a 398-amino-acid chain: Gastric triacylglycerol lipase (398 aa).

A signal peptide spans Met1 to Gly19. N-linked (GlcNAc...) asparagine glycans are attached at residues Asn34 and Asn99. An AB hydrolase-1 domain is found at Pro78–Trp377. Ser172 serves as the catalytic Nucleophile. A disulfide bond links Cys246 and Cys255. 2 N-linked (GlcNAc...) asparagine glycosylation sites follow: Asn271 and Asn327. Active-site charge relay system residues include Asp343 and His372.

This sequence belongs to the AB hydrolase superfamily. Lipase family.

It localises to the secreted. It carries out the reaction a triacylglycerol + H2O = a diacylglycerol + a fatty acid + H(+). The catalysed reaction is 1,2,3-tri-(9Z-octadecenoyl)-glycerol + H2O = 1,2-di-(9Z-octadecenoyl)-sn-glycerol + (9Z)-octadecenoate + H(+). The enzyme catalyses 1,2,3-trioctanoylglycerol + H2O = 1,2-dioctanoyl-sn-glycerol + octanoate + H(+). In terms of biological role, catalyzes the hydrolysis of triacylglycerols to yield free fatty acids, diacylglycerol, monoacylglycerol, and glycerol. Shows a preferential hydrolysis at the sn-3 position of triacylglycerol. The chain is Gastric triacylglycerol lipase (LIPF) from Homo sapiens (Human).